Reading from the N-terminus, the 242-residue chain is Zinc import ATP-binding protein ZnuC (242 aa).

Residues 24 to 241 enclose the ABC transporter domain; the sequence is INVENLSFFY…EKFLKMFSSY (218 aa). An ATP-binding site is contributed by 56–63; it reads GPNGGGKT.

It belongs to the ABC transporter superfamily. Zinc importer (TC 3.A.1.15.5) family. In terms of assembly, the complex is composed of two ATP-binding proteins (ZnuC), two transmembrane proteins (ZnuB) and a solute-binding protein (ZnuA).

It localises to the cell inner membrane. The catalysed reaction is Zn(2+)(out) + ATP(in) + H2O(in) = Zn(2+)(in) + ADP(in) + phosphate(in) + H(+)(in). Its function is as follows. Part of the ABC transporter complex ZnuABC involved in zinc import. Responsible for energy coupling to the transport system. The sequence is that of Zinc import ATP-binding protein ZnuC from Ehrlichia chaffeensis (strain ATCC CRL-10679 / Arkansas).